A 159-amino-acid chain; its full sequence is S-ribosylhomocysteine lyase (159 aa).

Positions 53, 57, and 124 each coordinate Fe cation.

Belongs to the LuxS family. As to quaternary structure, homodimer. Requires Fe cation as cofactor.

The catalysed reaction is S-(5-deoxy-D-ribos-5-yl)-L-homocysteine = (S)-4,5-dihydroxypentane-2,3-dione + L-homocysteine. Its function is as follows. Involved in the synthesis of autoinducer 2 (AI-2) which is secreted by bacteria and is used to communicate both the cell density and the metabolic potential of the environment. The regulation of gene expression in response to changes in cell density is called quorum sensing. Catalyzes the transformation of S-ribosylhomocysteine (RHC) to homocysteine (HC) and 4,5-dihydroxy-2,3-pentadione (DPD). The protein is S-ribosylhomocysteine lyase of Clostridium beijerinckii (strain ATCC 51743 / NCIMB 8052) (Clostridium acetobutylicum).